The primary structure comprises 662 residues: Calcium-dependent protease (662 aa).

One can recognise a Peptidase S8 domain in the interval 196–529; the sequence is QWHLKQTTIG…YGRINALKAV (334 aa). Catalysis depends on charge relay system residues D233, H270, and S466. A P/Homo B domain is found at 535–662; that stretch reads AQPEPVSIFT…IRSLTIELGF (128 aa).

This sequence belongs to the peptidase S8 family.

It localises to the cytoplasm. In terms of biological role, degrades phycobiliproteins in vitro. Has a substrate specificity similar to that of trypsin. This is Calcium-dependent protease (prcA) from Trichormus variabilis (strain ATCC 29413 / PCC 7937) (Anabaena variabilis).